Consider the following 703-residue polypeptide: Polyribonucleotide nucleotidyltransferase (703 aa).

The Mg(2+) site is built by Asp485 and Asp491. In terms of domain architecture, KH spans 552–611; the sequence is PRAYTINIDTDKIRTLIGTGGKTINKIIEETGVKIDIREDGTVFVLSSDADSANRALKMI. The region spanning 621 to 689 is the S1 motif domain; sequence GEVYLGKVTK…NQGRVNLSRK (69 aa).

This sequence belongs to the polyribonucleotide nucleotidyltransferase family. Mg(2+) serves as cofactor.

Its subcellular location is the cytoplasm. The enzyme catalyses RNA(n+1) + phosphate = RNA(n) + a ribonucleoside 5'-diphosphate. Involved in mRNA degradation. Catalyzes the phosphorolysis of single-stranded polyribonucleotides processively in the 3'- to 5'-direction. In Clostridium acetobutylicum (strain ATCC 824 / DSM 792 / JCM 1419 / IAM 19013 / LMG 5710 / NBRC 13948 / NRRL B-527 / VKM B-1787 / 2291 / W), this protein is Polyribonucleotide nucleotidyltransferase.